Consider the following 315-residue polypeptide: Small ribosomal subunit protein uS3 (315 aa).

In terms of domain architecture, KH type-2 spans 38–106 (IRKMMSRGME…QVQLNILEVK (69 aa)). A disordered region spans residues 211–315 (AEREAQEALQ…VANTPEKAEE (105 aa)). The span at 222–232 (QTRRERPRRGP) shows a compositional bias: basic residues. Residues 265–315 (APAETPAGEAAATEPTAPVAEPATAAASAPAEAASAPAEAAVANTPEKAEE) are compositionally biased toward low complexity.

Belongs to the universal ribosomal protein uS3 family. As to quaternary structure, part of the 30S ribosomal subunit. Forms a tight complex with proteins S10 and S14.

Functionally, binds the lower part of the 30S subunit head. Binds mRNA in the 70S ribosome, positioning it for translation. The polypeptide is Small ribosomal subunit protein uS3 (Frankia casuarinae (strain DSM 45818 / CECT 9043 / HFP020203 / CcI3)).